The following is a 277-amino-acid chain: Phosphonates import ATP-binding protein PhnC 2 (277 aa).

Positions 5–253 constitute an ABC transporter domain; it reads IHVQGLNKTF…FLNDLYGADA (249 aa). 37–44 is an ATP binding site; sequence GASGSGKS.

It belongs to the ABC transporter superfamily. Phosphonates importer (TC 3.A.1.9.1) family. The complex is composed of two ATP-binding proteins (PhnC), two transmembrane proteins (PhnE) and a solute-binding protein (PhnD).

The protein resides in the cell inner membrane. It catalyses the reaction phosphonate(out) + ATP + H2O = phosphonate(in) + ADP + phosphate + H(+). Its function is as follows. Part of the ABC transporter complex PhnCDE involved in phosphonates import. Responsible for energy coupling to the transport system. The chain is Phosphonates import ATP-binding protein PhnC 2 from Pseudomonas savastanoi pv. phaseolicola (strain 1448A / Race 6) (Pseudomonas syringae pv. phaseolicola (strain 1448A / Race 6)).